A 128-amino-acid chain; its full sequence is Large ribosomal subunit protein uL18 (128 aa).

This sequence belongs to the universal ribosomal protein uL18 family. As to quaternary structure, part of the 50S ribosomal subunit; part of the 5S rRNA/L5/L18/L25 subcomplex. Contacts the 5S and 23S rRNAs.

Its function is as follows. This is one of the proteins that bind and probably mediate the attachment of the 5S RNA into the large ribosomal subunit, where it forms part of the central protuberance. This is Large ribosomal subunit protein uL18 from Acidothermus cellulolyticus (strain ATCC 43068 / DSM 8971 / 11B).